The primary structure comprises 450 residues: Phosphoglucosamine mutase (450 aa).

The Phosphoserine intermediate role is filled by Ser-101. Residues Ser-101, Asp-240, Asp-242, and Asp-244 each contribute to the Mg(2+) site. The residue at position 101 (Ser-101) is a Phosphoserine.

This sequence belongs to the phosphohexose mutase family. Mg(2+) is required as a cofactor. In terms of processing, activated by phosphorylation.

It catalyses the reaction alpha-D-glucosamine 1-phosphate = D-glucosamine 6-phosphate. Catalyzes the conversion of glucosamine-6-phosphate to glucosamine-1-phosphate. The protein is Phosphoglucosamine mutase of Streptococcus pneumoniae serotype 4 (strain ATCC BAA-334 / TIGR4).